A 168-amino-acid chain; its full sequence is ATP synthase subunit b (168 aa).

Residues 13–33 form a helical membrane-spanning segment; it reads WTFLFQTLNLLVVMGLLYVFL.

This sequence belongs to the ATPase B chain family. In terms of assembly, F-type ATPases have 2 components, F(1) - the catalytic core - and F(0) - the membrane proton channel. F(1) has five subunits: alpha(3), beta(3), gamma(1), delta(1), epsilon(1). F(0) has three main subunits: a(1), b(2) and c(10-14). The alpha and beta chains form an alternating ring which encloses part of the gamma chain. F(1) is attached to F(0) by a central stalk formed by the gamma and epsilon chains, while a peripheral stalk is formed by the delta and b chains.

The protein resides in the cell membrane. Functionally, f(1)F(0) ATP synthase produces ATP from ADP in the presence of a proton or sodium gradient. F-type ATPases consist of two structural domains, F(1) containing the extramembraneous catalytic core and F(0) containing the membrane proton channel, linked together by a central stalk and a peripheral stalk. During catalysis, ATP synthesis in the catalytic domain of F(1) is coupled via a rotary mechanism of the central stalk subunits to proton translocation. Component of the F(0) channel, it forms part of the peripheral stalk, linking F(1) to F(0). This is ATP synthase subunit b from Moorella thermoacetica (strain ATCC 39073 / JCM 9320).